The chain runs to 247 residues: UPF0246 protein CD630_18230 (247 aa).

Belongs to the UPF0246 family.

The protein is UPF0246 protein CD630_18230 of Clostridioides difficile (strain 630) (Peptoclostridium difficile).